We begin with the raw amino-acid sequence, 151 residues long: Urease accessory protein UreE (151 aa).

It belongs to the UreE family.

Its subcellular location is the cytoplasm. In terms of biological role, involved in urease metallocenter assembly. Binds nickel. Probably functions as a nickel donor during metallocenter assembly. The sequence is that of Urease accessory protein UreE from Lachnoclostridium phytofermentans (strain ATCC 700394 / DSM 18823 / ISDg) (Clostridium phytofermentans).